We begin with the raw amino-acid sequence, 217 residues long: FMN-dependent NADH:quinone oxidoreductase (217 aa).

Residues serine 10 and 16 to 18 (SVS) each bind FMN.

The protein belongs to the azoreductase type 1 family. In terms of assembly, homodimer. FMN is required as a cofactor.

It catalyses the reaction 2 a quinone + NADH + H(+) = 2 a 1,4-benzosemiquinone + NAD(+). The enzyme catalyses N,N-dimethyl-1,4-phenylenediamine + anthranilate + 2 NAD(+) = 2-(4-dimethylaminophenyl)diazenylbenzoate + 2 NADH + 2 H(+). Functionally, quinone reductase that provides resistance to thiol-specific stress caused by electrophilic quinones. Its function is as follows. Also exhibits azoreductase activity. Catalyzes the reductive cleavage of the azo bond in aromatic azo compounds to the corresponding amines. The protein is FMN-dependent NADH:quinone oxidoreductase of Polaromonas naphthalenivorans (strain CJ2).